Here is a 405-residue protein sequence, read N- to C-terminus: Splicing factor 45 (405 aa).

Ser-2 is subject to N-acetylserine. Position 2 is a phosphoserine (Ser-2). Lys-15 is covalently cross-linked (Glycyl lysine isopeptide (Lys-Gly) (interchain with G-Cter in SUMO2)). Lys-21 bears the N6-acetyllysine mark. Residues Lys-24 and Lys-33 each participate in a glycyl lysine isopeptide (Lys-Gly) (interchain with G-Cter in SUMO2) cross-link. Residue Lys-41 is modified to N6-acetyllysine; alternate. Lys-41 is covalently cross-linked (Glycyl lysine isopeptide (Lys-Gly) (interchain with G-Cter in SUMO2); alternate). Over residues 57-68 (LKRGGSSDDRQI) the composition is skewed to basic and acidic residues. 2 disordered regions span residues 57–88 (LKRGGSSDDRQIADTPPHVAAGLKDPVPSGFS) and 114–233 (RQRE…FLAN). A Glycyl lysine isopeptide (Lys-Gly) (interchain with G-Cter in SUMO2) cross-link involves residue Lys-58. Position 71 is a phosphothreonine (Thr-71). The span at 114–153 (RQREERQRQRELERQKEIEEREKRRKDRHEASGFSRRPDP) shows a compositional bias: basic and acidic residues. 2 positions are modified to phosphoserine: Ser-155 and Ser-169. The span at 182–200 (VEKDKELPRDFPYEEDSRP) shows a compositional bias: basic and acidic residues. Residue Ser-222 is modified to Phosphoserine. The G-patch domain occupies 235 to 283 (GGTVAHKIMQKYGFREGQGLGKHEQGLSTALSVEKTSKRGGKIIVGDAT). The residue at position 237 (Thr-237) is a Phosphothreonine. A Glycyl lysine isopeptide (Lys-Gly) (interchain with G-Cter in SUMO2) cross-link involves residue Lys-256. Position 266 is a phosphoserine (Ser-266). Lys-276 participates in a covalent cross-link: Glycyl lysine isopeptide (Lys-Gly) (interchain with G-Cter in SUMO2). Residues Ser-295 and Ser-297 each carry the phosphoserine modification. One can recognise an RRM domain in the interval 310 to 389 (VVLLRNMVGA…YFGGRVVKAC (80 aa)).

Binds SXL. Associates with the spliceosome. Interacts with SF3B1, SF1 and U2AF2.

It is found in the nucleus. Its function is as follows. Splice factor that binds to the single-stranded 3'AG at the exon/intron border and promotes its utilization in the second catalytic step. Involved in the regulation of alternative splicing and the utilization of cryptic splice sites. This is Splicing factor 45 (Rbm17) from Mus musculus (Mouse).